A 293-amino-acid polypeptide reads, in one-letter code: MSLFDWFADRRKGQYVANVKQEPDEGDGLWSKCPECGQVVYLKDLKLNASVCANCGHHHRIDSAERIALIADPDSFQVLNADLAPVDPLGFKDRRAYADRLRESQASTGLRDGVVTGLCRVEGIPMGLAAMDFRFMGGSMGSVVGEKITRLIEDSTARKLPLLIVCASGGARMQEGMLSLMQMAKISGALERHREAELLYMPLLTHPTTGGVTASFAMLGDLILAEPKALIGFAGRRVIEQTLREKLPDNFQTAEYLQEHGFVDTIVPRTQLRSTLANLLRLHGCKPMELTSA.

The CoA carboxyltransferase N-terminal domain maps to 29–293 (LWSKCPECGQ…GCKPMELTSA (265 aa)). Zn(2+) contacts are provided by C33, C36, C52, and C55. Residues 33 to 55 (CPECGQVVYLKDLKLNASVCANC) form a C4-type zinc finger.

This sequence belongs to the AccD/PCCB family. As to quaternary structure, acetyl-CoA carboxylase is a heterohexamer composed of biotin carboxyl carrier protein (AccB), biotin carboxylase (AccC) and two subunits each of ACCase subunit alpha (AccA) and ACCase subunit beta (AccD). Zn(2+) serves as cofactor.

It is found in the cytoplasm. It carries out the reaction N(6)-carboxybiotinyl-L-lysyl-[protein] + acetyl-CoA = N(6)-biotinyl-L-lysyl-[protein] + malonyl-CoA. Its pathway is lipid metabolism; malonyl-CoA biosynthesis; malonyl-CoA from acetyl-CoA: step 1/1. In terms of biological role, component of the acetyl coenzyme A carboxylase (ACC) complex. Biotin carboxylase (BC) catalyzes the carboxylation of biotin on its carrier protein (BCCP) and then the CO(2) group is transferred by the transcarboxylase to acetyl-CoA to form malonyl-CoA. The chain is Acetyl-coenzyme A carboxylase carboxyl transferase subunit beta from Synechococcus sp. (strain CC9605).